We begin with the raw amino-acid sequence, 411 residues long: Squalene synthase (411 aa).

NADP(+) is bound by residues R49 and R74. Mg(2+)-binding residues include D77, E80, and D81. NADP(+) contacts are provided by R212, K312, and R314. The helical transmembrane segment at 388–408 (SPVLIVVIFIILAIILAQLFG) threads the bilayer.

The protein belongs to the phytoene/squalene synthase family. Mg(2+) serves as cofactor.

The protein resides in the membrane. The enzyme catalyses 2 (2E,6E)-farnesyl diphosphate + NADH + H(+) = squalene + 2 diphosphate + NAD(+). It carries out the reaction 2 (2E,6E)-farnesyl diphosphate + NADPH + H(+) = squalene + 2 diphosphate + NADP(+). Its function is as follows. Converts farnesyl diphosphate (FPP) into squalene, a precursor for sterol biosynthesis in eukaryotes. The chain is Squalene synthase from Solanum lycopersicum (Tomato).